The chain runs to 193 residues: Imidazoleglycerol-phosphate dehydratase (193 aa).

This sequence belongs to the imidazoleglycerol-phosphate dehydratase family.

Its subcellular location is the cytoplasm. It catalyses the reaction D-erythro-1-(imidazol-4-yl)glycerol 3-phosphate = 3-(imidazol-4-yl)-2-oxopropyl phosphate + H2O. The protein operates within amino-acid biosynthesis; L-histidine biosynthesis; L-histidine from 5-phospho-alpha-D-ribose 1-diphosphate: step 6/9. The protein is Imidazoleglycerol-phosphate dehydratase of Methanoculleus marisnigri (strain ATCC 35101 / DSM 1498 / JR1).